A 208-amino-acid chain; its full sequence is Small ribosomal subunit protein uS4 (208 aa).

The region spanning 98 to 160 (RRLDNVVYRL…SKSKTRFVEI (63 aa)) is the S4 RNA-binding domain.

It belongs to the universal ribosomal protein uS4 family. Part of the 30S ribosomal subunit. Contacts protein S5. The interaction surface between S4 and S5 is involved in control of translational fidelity.

One of the primary rRNA binding proteins, it binds directly to 16S rRNA where it nucleates assembly of the body of the 30S subunit. In terms of biological role, with S5 and S12 plays an important role in translational accuracy. The sequence is that of Small ribosomal subunit protein uS4 from Caldicellulosiruptor bescii (strain ATCC BAA-1888 / DSM 6725 / KCTC 15123 / Z-1320) (Anaerocellum thermophilum).